Consider the following 88-residue polypeptide: Large ribosomal subunit protein eL31 (88 aa).

The protein belongs to the eukaryotic ribosomal protein eL31 family.

This chain is Large ribosomal subunit protein eL31 (rpl31e), found in Sulfurisphaera tokodaii (strain DSM 16993 / JCM 10545 / NBRC 100140 / 7) (Sulfolobus tokodaii).